We begin with the raw amino-acid sequence, 307 residues long: 4-hydroxybenzoate octaprenyltransferase (307 aa).

9 consecutive transmembrane segments (helical) span residues 19 to 39, 48 to 68, 105 to 125, 127 to 147, 150 to 170, 172 to 192, 221 to 241, 243 to 263, and 282 to 302; these read PVGIELLLWPTLWGVLFAAMG, VTAGLPSLSIFVVFALGAILM, AIAAFLVLVLLSASLLLFLPI, VFYWSFAAVILAFIYPFMKRY, LPQVFLAAAFGWAIPMAYVAI, GAADIWCWLLFLAYMCWTVAY, VIIISLLQILFLVIMGAVMWH, FVPTSLGITPVFGLALVAMMF, and FLANIWVGRYVFALIAIACVW.

Belongs to the UbiA prenyltransferase family. Requires Mg(2+) as cofactor.

It is found in the cell inner membrane. It catalyses the reaction all-trans-octaprenyl diphosphate + 4-hydroxybenzoate = 4-hydroxy-3-(all-trans-octaprenyl)benzoate + diphosphate. The protein operates within cofactor biosynthesis; ubiquinone biosynthesis. Functionally, catalyzes the prenylation of para-hydroxybenzoate (PHB) with an all-trans polyprenyl group. Mediates the second step in the final reaction sequence of ubiquinone-8 (UQ-8) biosynthesis, which is the condensation of the polyisoprenoid side chain with PHB, generating the first membrane-bound Q intermediate 3-octaprenyl-4-hydroxybenzoate. The chain is 4-hydroxybenzoate octaprenyltransferase from Psychrobacter arcticus (strain DSM 17307 / VKM B-2377 / 273-4).